A 96-amino-acid chain; its full sequence is SAGA complex subunit SUS1 (96 aa).

A Glycyl lysine isopeptide (Lys-Gly) (interchain with G-Cter in ubiquitin) cross-link involves residue lysine 68.

It belongs to the ENY2 family. In terms of assembly, component of the 1.8 MDa SAGA (Spt-Ada-Gcn5 acetyltransferase) complex, which is composed of 19 subunits TRA1, SPT7, TAF5, NGG1/ADA3, SGF73, SPT20/ADA5, SPT8, TAF12, TAF6, HFI1/ADA1, UBP8, GCN5, ADA2, SPT3, SGF29, TAF10, TAF9, SGF11 and SUS1. The SAGA complex is composed of 4 modules, namely the HAT (histone acetyltransferase) module (GCN5, ADA2, NGG1/ADA3 and SGF29), the DUB (deubiquitinating) module (UBP8, SGF11, SGF73 and SUS1), the core or TAF (TBP-associated factor) module (TAF5, TAF6, TAF9, TAF10 and TAF12), and the Tra1 or SPT (Suppressor of Ty) module (TRA1, HFI1/ADA1, SPT3, SPT7, SPT8 and SPT20/ADA5). The Tra1/SPT module binds activators, the core module recruits TBP (TATA-binding protein), the HAT module contains the histone H3 acetyltransferase GCN5, and the DUB module comprises the histone H2B deubiquitinase UBP8. Also identified in an altered form of SAGA, named SALSA (SAGA altered, Spt8 absent) or SLIK (SAGA-like) complex, which contains a C-terminal truncated form of SPT7 and is missing SPT8. However, it has been shown that the SAGA and SAGA-like SALSA/SLIK transcriptional coactivators are structurally and biochemically equivalent. Component of the nuclear pore complex (NPC)-associated TREX-2 complex (transcription and export complex 2), composed of at least SUS1, SAC3, THP1, SEM1, and CDC31. TREX-2 contains 2 SUS1 chains. The TREX-2 complex interacts with the mRNA export factors MEX67, MTR2 and SUB2, and the nucleoporin NUP1. Interacts directly with THP1, SAC3. Interacts directly with SGF11 and UBP8. Interacts with YRA1, MEX67 and with the RNA polymerase II.

It localises to the nucleus. The protein resides in the nucleoplasm. The protein localises to the cytoplasm. Its subcellular location is the P-body. In terms of biological role, involved in mRNA export coupled transcription activation by association with both the TREX-2 and the SAGA complexes. SAGA acts as a general cofactor required for essentially all RNA polymerase II transcription. At the promoters, SAGA is required for transcription pre-initiation complex (PIC) recruitment. It influences RNA polymerase II transcriptional activity through different activities such as TBP interaction (via core/TAF module) and promoter selectivity, interaction with transcription activators (via Tra1/SPT module), and chromatin modification through histone acetylation (via HAT module) and deubiquitination (via DUB module). SAGA preferentially acetylates histones H3 (to form H3K9ac, H3K14ac, H3K18ac and H3K23ac) and H2B and deubiquitinates histone H2B. SAGA interacts with DNA via upstream activating sequences (UASs). Also identified in a modified version of SAGA named SALSA or SLIK. The cleavage of SPT7 and the absence of the SPT8 subunit in SLIK neither drive any major conformational differences in its structure compared with SAGA, nor significantly affect HAT, DUB, or DNA-binding activities. Within the SAGA complex, participates in a subcomplex with SGF11, SGF73 and UBP8 required for deubiquitination of H2B and for the maintenance of steady-state H3 methylation levels. The TREX-2 complex functions in docking export-competent ribonucleoprotein particles (mRNPs) to the nuclear entrance of the nuclear pore complex (nuclear basket), by association with components of the nuclear mRNA export machinery (MEX67-MTR2 and SUB2) in the nucleoplasm and the nucleoporin NUP1 at the nuclear basket. TREX-2 participates in mRNA export and accurate chromatin positioning in the nucleus by tethering genes to the nuclear periphery. SUS1 also has a role in mRNP biogenesis and maintenance of genome integrity through preventing RNA-mediated genome instability. Has a role in response to DNA damage induced by methyl methane sulfonate (MMS) and replication arrest induced by hydroxyurea. May also be involved in cytoplasmic mRNA decay by interaction with components of P-bodies. The protein is SAGA complex subunit SUS1 of Saccharomyces cerevisiae (strain ATCC 204508 / S288c) (Baker's yeast).